The sequence spans 177 residues: Cyclic pyranopterin monophosphate synthase (177 aa).

Substrate-binding positions include 89–91 and 125–126; these read LCH and ME. Residue Asp140 is part of the active site.

This sequence belongs to the MoaC family. As to quaternary structure, homohexamer; trimer of dimers.

It carries out the reaction (8S)-3',8-cyclo-7,8-dihydroguanosine 5'-triphosphate = cyclic pyranopterin phosphate + diphosphate. The protein operates within cofactor biosynthesis; molybdopterin biosynthesis. In terms of biological role, catalyzes the conversion of (8S)-3',8-cyclo-7,8-dihydroguanosine 5'-triphosphate to cyclic pyranopterin monophosphate (cPMP). This is Cyclic pyranopterin monophosphate synthase from Streptomyces griseus subsp. griseus (strain JCM 4626 / CBS 651.72 / NBRC 13350 / KCC S-0626 / ISP 5235).